We begin with the raw amino-acid sequence, 606 residues long: Polyphenol oxidase A1, chloroplastic (606 aa).

Residues 1-92 (MTSISALSFI…TLATNPSALA (92 aa)) constitute a chloroplast transit peptide. The interval 32–63 (KQHQSSKLRKPKRQVTCSSNNNQNNPKEEQEL) is disordered. Residues 35–44 (QSSKLRKPKR) show a composition bias toward basic residues. 2 disulfide bridges follow: cysteine 103–cysteine 121 and cysteine 120–cysteine 182. Cu cation-binding residues include histidine 181, histidine 202, histidine 211, histidine 333, histidine 337, and histidine 367. Positions 185 to 202 (CDGAYSQIGFPDLKLQVH) form a cross-link, 2'-(S-cysteinyl)-histidine (Cys-His).

The protein belongs to the tyrosinase family. Cu(2+) is required as a cofactor.

Its subcellular location is the plastid. It localises to the chloroplast thylakoid lumen. The catalysed reaction is 2 catechol + O2 = 2 1,2-benzoquinone + 2 H2O. Catalyzes the oxidation of mono- and o-diphenols to o-diquinones. The protein is Polyphenol oxidase A1, chloroplastic of Vicia faba (Broad bean).